Here is a 170-residue protein sequence, read N- to C-terminus: Lipoprotein signal peptidase (170 aa).

3 consecutive transmembrane segments (helical) span residues 12-32 (WYWVVVLVFVADQLSKQWVLS), 67-87 (WQRWLFTFVAVGFSVVLSVWL), and 94-116 (MWRLNLAYTLVIGGALGNLIDRL). Residues aspartate 123 and aspartate 141 contribute to the active site. Residues 133-153 (HFPAFNIADSAICVGAALIIL) form a helical membrane-spanning segment.

This sequence belongs to the peptidase A8 family.

It is found in the cell inner membrane. It carries out the reaction Release of signal peptides from bacterial membrane prolipoproteins. Hydrolyzes -Xaa-Yaa-Zaa-|-(S,diacylglyceryl)Cys-, in which Xaa is hydrophobic (preferably Leu), and Yaa (Ala or Ser) and Zaa (Gly or Ala) have small, neutral side chains.. Its pathway is protein modification; lipoprotein biosynthesis (signal peptide cleavage). Its function is as follows. This protein specifically catalyzes the removal of signal peptides from prolipoproteins. This Shewanella halifaxensis (strain HAW-EB4) protein is Lipoprotein signal peptidase.